The following is a 291-amino-acid chain: Secretory carrier-associated membrane protein 5 (291 aa).

Positions 1–10 (MGGRYDRNTF) are enriched in basic and acidic residues. The segment at 1 to 66 (MGGRYDRNTF…GSGAQDLKKK (66 aa)) is disordered. Topologically, residues 1 to 126 (MGGRYDRNTF…EILVRLQRLQ (126 aa)) are cytoplasmic. Phosphoserine is present on Ser-34. A coiled-coil region spans residues 58-94 (SGAQDLKKKEKELQAKEADLRRREQDLKRKQDAAARA). Transmembrane regions (helical) follow at residues 127–147 (YIAF…IIAV), 159–179 (IWLL…VLWY), 194–214 (FGWF…AAVA), and 242–262 (IFYF…IWVI). Topologically, residues 263 to 288 (QQVYMYFRGSGKADDMRRDAARGAMR) are cytoplasmic.

The protein belongs to the SCAMP family.

The protein resides in the cell membrane. It localises to the cytoplasmic vesicle. The protein localises to the secretory vesicle membrane. Probably involved in membrane trafficking. This is Secretory carrier-associated membrane protein 5 (SCAMP5) from Arabidopsis thaliana (Mouse-ear cress).